The sequence spans 214 residues: Large ribosomal subunit protein uL16 (214 aa).

Citrulline is present on Arg32. Lys175 is covalently cross-linked (Glycyl lysine isopeptide (Lys-Gly) (interchain with G-Cter in SUMO2)). Lys188 participates in a covalent cross-link: Glycyl lysine isopeptide (Lys-Gly) (interchain with G-Cter in ubiquitin).

Belongs to the universal ribosomal protein uL16 family. In terms of assembly, component of the large ribosomal subunit. Mature ribosomes consist of a small (40S) and a large (60S) subunit. The 40S subunit contains about 33 different proteins and 1 molecule of RNA (18S). The 60S subunit contains about 49 different proteins and 3 molecules of RNA (28S, 5.8S and 5S). In terms of processing, citrullinated by PADI4. Ufmylated by UFL1.

The protein resides in the cytoplasm. Functionally, component of the large ribosomal subunit. Plays a role in the formation of actively translating ribosomes. May play a role in the embryonic brain development. The protein is Large ribosomal subunit protein uL16 of Pongo abelii (Sumatran orangutan).